A 268-amino-acid chain; its full sequence is UPF0354 protein OB2234 (268 aa).

Belongs to the UPF0354 family.

This Oceanobacillus iheyensis (strain DSM 14371 / CIP 107618 / JCM 11309 / KCTC 3954 / HTE831) protein is UPF0354 protein OB2234.